The chain runs to 132 residues: Small ribosomal subunit protein uS8 (132 aa).

Belongs to the universal ribosomal protein uS8 family. In terms of assembly, part of the 30S ribosomal subunit. Contacts proteins S5 and S12.

In terms of biological role, one of the primary rRNA binding proteins, it binds directly to 16S rRNA central domain where it helps coordinate assembly of the platform of the 30S subunit. This Rubrobacter xylanophilus (strain DSM 9941 / JCM 11954 / NBRC 16129 / PRD-1) protein is Small ribosomal subunit protein uS8.